A 197-amino-acid polypeptide reads, in one-letter code: 7-methyl-GTP pyrophosphatase (197 aa).

The Proton acceptor role is filled by Asp-73.

It belongs to the Maf family. YceF subfamily. It depends on a divalent metal cation as a cofactor.

It is found in the cytoplasm. The enzyme catalyses N(7)-methyl-GTP + H2O = N(7)-methyl-GMP + diphosphate + H(+). Its function is as follows. Nucleoside triphosphate pyrophosphatase that hydrolyzes 7-methyl-GTP (m(7)GTP). May have a dual role in cell division arrest and in preventing the incorporation of modified nucleotides into cellular nucleic acids. The chain is 7-methyl-GTP pyrophosphatase from Alcanivorax borkumensis (strain ATCC 700651 / DSM 11573 / NCIMB 13689 / SK2).